Consider the following 489-residue polypeptide: Glycogen synthase (489 aa).

Residue arginine 20 participates in ADP-alpha-D-glucose binding.

Belongs to the glycosyltransferase 1 family. Bacterial/plant glycogen synthase subfamily.

It catalyses the reaction [(1-&gt;4)-alpha-D-glucosyl](n) + ADP-alpha-D-glucose = [(1-&gt;4)-alpha-D-glucosyl](n+1) + ADP + H(+). Its pathway is glycan biosynthesis; glycogen biosynthesis. Its function is as follows. Synthesizes alpha-1,4-glucan chains using ADP-glucose. The sequence is that of Glycogen synthase from Chlorobium phaeobacteroides (strain DSM 266 / SMG 266 / 2430).